A 252-amino-acid chain; its full sequence is Ribosomal RNA small subunit methyltransferase NEP1 (252 aa).

S-adenosyl-L-methionine is bound by residues Leu-180, Gly-207, 212 to 214 (GKD), and 227 to 232 (LSNYPL).

This sequence belongs to the class IV-like SAM-binding methyltransferase superfamily. RNA methyltransferase NEP1 family. As to quaternary structure, homodimer. Interacts with snoRNA U3. Interacts with NOP14 and MPP10. Component of the ribosomal small subunit (SSU) processome composed of at least 40 protein subunits and snoRNA U3.

Its subcellular location is the nucleus. The protein localises to the nucleolus. It carries out the reaction pseudouridine(1191) in yeast 18S rRNA + S-adenosyl-L-methionine = N(1)-methylpseudouridine(1191) in yeast 18S rRNA + S-adenosyl-L-homocysteine + H(+). Its function is as follows. S-adenosyl-L-methionine-dependent pseudouridine N(1)-methyltransferase that methylates pseudouridine at position 1189 (Psi1189) in 18S rRNA. Involved the biosynthesis of the hypermodified N1-methyl-N3-(3-amino-3-carboxypropyl) pseudouridine (m1acp3-Psi) conserved in eukaryotic 18S rRNA. N1-methylation is independent on acp-modification at the N3-position of U1191. Also has an essential role in 40S ribosomal subunit biogenesis independent on its methyltransferase activity, facilitating the incorporation of ribosomal protein S19 (RPS19A/RPS19B) during the formation of pre-ribosomes. This is Ribosomal RNA small subunit methyltransferase NEP1 from Saccharomyces cerevisiae (strain ATCC 204508 / S288c) (Baker's yeast).